The chain runs to 754 residues: 17S U2 SnRNP complex component HTATSF1 (754 aa).

Disordered stretches follow at residues 1–53 (MSGT…YEWD) and 81–122 (GASS…KAES). Position 2 is an N-acetylserine (serine 2). Positions 90 to 122 (EDVHARTAEEPPQEKAPEPTDPRKKGEKRKAES) are enriched in basic and acidic residues. RRM domains are found at residues 133–218 (TNVY…VAKF) and 264–349 (RVVI…AWDG). Positions 259 to 353 (RMRHERVVII…AQAWDGTTDY (95 aa)) are U2AF homology motif (UHM). Lysine 297 is modified (N6-acetyllysine). The interval 380–415 (RGLRRSDSVSASERAGPSRARHFSEHPSTSKMNAQE) is disordered. The tract at residues 381–754 (GLRRSDSVSA…ILSSDDDDDI (374 aa)) is mediates interaction with the P-TEFb complex. Residues serine 387, serine 403, serine 407, and serine 409 each carry the phosphoserine modification. Residues 405–415 (HPSTSKMNAQE) are compositionally biased toward polar residues. Residues lysine 429 and lysine 430 each participate in a glycyl lysine isopeptide (Lys-Gly) (interchain with G-Cter in SUMO2) cross-link. The tract at residues 433 to 754 (KTEDGGEFEE…ILSSDDDDDI (322 aa)) is disordered. Residues serine 445, serine 452, and serine 453 each carry the phosphoserine modification. The segment covering 462–476 (CPGKESEEGCPKRGF) has biased composition (basic and acidic residues). Residues serine 481, serine 485, serine 494, serine 498, serine 521, and serine 529 each carry the phosphoserine modification. The span at 508 to 538 (LRNDCEENGFAKESEDDPNKESEEEVGPTKE) shows a compositional bias: basic and acidic residues. Residues 539–552 (SEEDDSEKESDEDC) are compositionally biased toward acidic residues. Basic and acidic residues predominate over residues 553–563 (SEKQSEDGSER). A phosphoserine mark is found at serine 557, serine 561, and serine 579. The segment covering 564 to 579 (EFEENGLEKDLDEEGS) has biased composition (acidic residues). A compositionally biased stretch (basic and acidic residues) spans 580–590 (EKELHENVLDK). Positions 591-606 (ELEENDSENSEFEDDG) are enriched in acidic residues. Serine 597, serine 600, serine 607, serine 616, and serine 624 each carry phosphoserine. 2 stretches are compositionally biased toward acidic residues: residues 613-633 (EEGS…EEDT) and 640-651 (DESNEKEDEEYA). A Phosphothreonine modification is found at threonine 633. Residue serine 642 is modified to Phosphoserine. Basic and acidic residues predominate over residues 652–674 (DEKGLEAADKKEEEGDADEKLFE). Residues 675–713 (ESDDKEDEDADGKEVEDADEKLFEDDDSNEKLFDEEEDS) are compositionally biased toward acidic residues. Phosphoserine occurs at positions 676, 702, 713, 721, and 748. Residues 714–725 (NEKLFDDSDERG) show a composition bias toward basic and acidic residues.

This sequence belongs to the HTATSF1 family. Component of the 17S U2 SnRNP complex, a ribonucleoprotein complex that contains small nuclear RNA (snRNA) U2 and a number of specific proteins. Within the 17S U2 SnRNP complex, interacts (via UHM region) directly with SF3B1. Component of a complex which is at least composed of HTATSF1/Tat-SF1, the P-TEFb complex components CDK9 and CCNT1, RNA polymerase II, SUPT5H, and NCL/nucleolin. Interacts with GTF2F2/RAP30 and POLR2A. Interacts with TCERG1/CA150. Interacts with (poly-ADP-ribosylated) RPA1; promoting HTATSF1 recruitment to DNA damage sites. Interacts (when phosphorylated) with TOPBP1; promoting recruitment of TOPBP1 to DNA damage sites during S-phase. Post-translationally, phosphorylation at Ser-748 by CK2 during S-phase in response to DNA damage promotes interaction with TOPBP1 and double-strand break (DSB) repair via homologous recombination.

The protein localises to the nucleus. It is found in the chromosome. Functionally, component of the 17S U2 SnRNP complex of the spliceosome, a large ribonucleoprotein complex that removes introns from transcribed pre-mRNAs. The 17S U2 SnRNP complex (1) directly participates in early spliceosome assembly and (2) mediates recognition of the intron branch site during pre-mRNA splicing by promoting the selection of the pre-mRNA branch-site adenosine, the nucleophile for the first step of splicing. Within the 17S U2 SnRNP complex, HTATSF1 is required to stabilize the branchpoint-interacting stem loop. HTATSF1 is displaced from the 17S U2 SnRNP complex before the stable addition of the 17S U2 SnRNP complex to the spliceosome, destabilizing the branchpoint-interacting stem loop and allowing to probe intron branch site sequences. Also acts as a regulator of transcriptional elongation, possibly by mediating the reciprocal stimulatory effect of splicing on transcriptional elongation. Involved in double-strand break (DSB) repair via homologous recombination in S-phase by promoting the recruitment of TOPBP1 to DNA damage sites. Mechanistically, HTATSF1 is (1) recruited to DNA damage sites in S-phase via interaction with poly-ADP-ribosylated RPA1 and (2) phosphorylated by CK2, promoting recruitment of TOPBP1, thereby facilitating RAD51 nucleofilaments formation and RPA displacement, followed by homologous recombination. This chain is 17S U2 SnRNP complex component HTATSF1 (HTATSF1), found in Pongo abelii (Sumatran orangutan).